The chain runs to 1062 residues: Platelet-derived growth factor receptor alpha (1062 aa).

The signal sequence occupies residues 1–27 (MFPPSSAPLLLPQLEELVVPLHTAFTL). Ig-like C2-type domains are found at residues 28-96 (TCQG…VYVP), 91-184 (IYVY…VHGW), 190-281 (LHVE…KQIA), 287-381 (SEFM…RTVS), and 389-493 (PAVI…IKLV). Residues 28–504 (TCQGEATIAW…NGPHPELTVA (477 aa)) lie on the Extracellular side of the membrane. An intrachain disulfide couples Cys-29 to Cys-74. Asn-79 and Asn-132 each carry an N-linked (GlcNAc...) asparagine glycan. 2 disulfides stabilise this stretch: Cys-124-Cys-165 and Cys-211-Cys-265. Residues Asn-273, Asn-333, Asn-366, Asn-433, and Asn-444 are each glycosylated (N-linked (GlcNAc...) asparagine). A disulfide bond links Cys-410 and Cys-477. Residues 505–525 (AAVLVLLVIVIISLIVLVVIW) form a helical membrane-spanning segment. At 526 to 1062 (KQKPRYEIRW…CSDLVEDSFL (537 aa)) the chain is on the cytoplasmic side. Tyr-548 and Tyr-550 each carry phosphotyrosine; by autocatalysis. One can recognise a Protein kinase domain in the interval 569–945 (LVLGRILGSG…HYERVNHEFL (377 aa)). Residues 575 to 583 (LGSGAFGKV) and Lys-603 contribute to the ATP site. 5 positions are modified to phosphotyrosine; by autocatalysis: Tyr-697, Tyr-708, Tyr-719, Tyr-731, and Tyr-739. The disordered stretch occupies residues 734-754 (LQGSNYDHPPSQKGSNDGEMD). Asp-793 serves as the catalytic Proton acceptor. 2 positions are modified to phosphotyrosine; by autocatalysis: Tyr-824 and Tyr-963. Positions 975–986 (KDRESGFDEQRL) are enriched in basic and acidic residues. A disordered region spans residues 975 to 1034 (KDRESGFDEQRLSSDSGYIIPLPDLDPISDEEYGKRNRHSSQTSEESAIETGSSSSTFAK). Position 992 is a phosphotyrosine; by autocatalysis (Tyr-992). The segment covering 1014 to 1032 (SSQTSEESAIETGSSSSTF) has biased composition (polar residues).

Belongs to the protein kinase superfamily. Tyr protein kinase family. CSF-1/PDGF receptor subfamily. As to quaternary structure, interacts with homodimeric pdgfa, pdgfb and pdgfc, and with heterodimers formed by pdgfa and pdgfb. monomer in the absence of bound ligand. Interaction with dimeric pdgfa, pdgfb and/or pdgfc leads to receptor dimerization, where both pdgfra homodimers and heterodimers with pdgfrb are observed. Ubiquitinated, leading to its degradation. In terms of processing, autophosphorylated on tyrosine residues upon ligand binding. Autophosphorylation occurs in trans, i.e. one subunit of the dimeric receptor phosphorylates tyrosine residues on the other subunit.

The protein localises to the cell membrane. The catalysed reaction is L-tyrosyl-[protein] + ATP = O-phospho-L-tyrosyl-[protein] + ADP + H(+). Present in an inactive conformation in the absence of bound ligand. Binding of pdgfa and/or pdgfb leads to dimerization and activation by autophosphorylation on tyrosine residues. Tyrosine-protein kinase that acts as a cell-surface receptor for pdgfa, pdgfb and pdgfc and plays an essential role in the regulation of embryonic development, cell proliferation, survival and chemotaxis. Depending on the context, promotes or inhibits cell proliferation and cell migration. Plays an important role in the differentiation of bone marrow-derived mesenchymal stem cells. Required for normal skeleton development. Required for normal development of the gastrointestinal tract. Plays a role in cell migration and chemotaxis in wound healing. Plays a role in platelet activation, secretion of agonists from platelet granules, and in thrombin-induced platelet aggregation. Binding of its cognate ligands - homodimeric pdgfa, homodimeric pdgfb, heterodimers formed by pdgfa and pdgfb or homodimeric pdgfc -leads to the activation of several signaling cascades; the response depends on the nature of the bound ligand and is modulated by the formation of heterodimers between pdgfra and pdgfrb. Phosphorylates pik3r1, plcg1, and ptpn11. Activation of plcg1 leads to the production of the cellular signaling molecules diacylglycerol and inositol 1,4,5-trisphosphate, mobilization of cytosolic Ca(2+) and the activation of protein kinase C. Phosphorylates pik3r1, the regulatory subunit of phosphatidylinositol 3-kinase, and thereby mediates activation of the AKT1 signaling pathway. Mediates activation of hras and of the MAP kinases mapk1/erk2 and/or mapk3/erk1. Promotes activation of STAT family members stat1, stat3 and stat5a and/or stat5b. Receptor signaling is down-regulated by protein phosphatases that dephosphorylate the receptor and its down-stream effectors, and by rapid internalization of the activated receptor. The polypeptide is Platelet-derived growth factor receptor alpha (pdgfra) (Takifugu rubripes (Japanese pufferfish)).